A 612-amino-acid chain; its full sequence is Dihydroxy-acid dehydratase (612 aa).

Mg(2+) is bound at residue aspartate 81. Cysteine 122 contacts [2Fe-2S] cluster. Residues aspartate 123 and lysine 124 each coordinate Mg(2+). Residue lysine 124 is modified to N6-carboxylysine. Residue cysteine 195 coordinates [2Fe-2S] cluster. Glutamate 491 contributes to the Mg(2+) binding site. The active-site Proton acceptor is serine 517.

This sequence belongs to the IlvD/Edd family. As to quaternary structure, homodimer. Requires [2Fe-2S] cluster as cofactor. Mg(2+) serves as cofactor.

The catalysed reaction is (2R)-2,3-dihydroxy-3-methylbutanoate = 3-methyl-2-oxobutanoate + H2O. It carries out the reaction (2R,3R)-2,3-dihydroxy-3-methylpentanoate = (S)-3-methyl-2-oxopentanoate + H2O. Its pathway is amino-acid biosynthesis; L-isoleucine biosynthesis; L-isoleucine from 2-oxobutanoate: step 3/4. The protein operates within amino-acid biosynthesis; L-valine biosynthesis; L-valine from pyruvate: step 3/4. Functions in the biosynthesis of branched-chain amino acids. Catalyzes the dehydration of (2R,3R)-2,3-dihydroxy-3-methylpentanoate (2,3-dihydroxy-3-methylvalerate) into 2-oxo-3-methylpentanoate (2-oxo-3-methylvalerate) and of (2R)-2,3-dihydroxy-3-methylbutanoate (2,3-dihydroxyisovalerate) into 2-oxo-3-methylbutanoate (2-oxoisovalerate), the penultimate precursor to L-isoleucine and L-valine, respectively. This Sinorhizobium fredii (strain NBRC 101917 / NGR234) protein is Dihydroxy-acid dehydratase.